Consider the following 255-residue polypeptide: tRNA uridine(34) hydroxylase (255 aa).

Positions 125–219 (ATPDTILLDV…YLEQIPESES (95 aa)) constitute a Rhodanese domain. The active-site Cysteine persulfide intermediate is the C179.

The protein belongs to the TrhO family.

It catalyses the reaction uridine(34) in tRNA + AH2 + O2 = 5-hydroxyuridine(34) in tRNA + A + H2O. Functionally, catalyzes oxygen-dependent 5-hydroxyuridine (ho5U) modification at position 34 in tRNAs. The chain is tRNA uridine(34) hydroxylase from Nitrobacter winogradskyi (strain ATCC 25391 / DSM 10237 / CIP 104748 / NCIMB 11846 / Nb-255).